A 261-amino-acid polypeptide reads, in one-letter code: Cytochrome c oxidase subunit 3 (261 aa).

At 1–15 (MTHQTHAYHMVNPSP) the chain is on the mitochondrial matrix side. A helical membrane pass occupies residues 16–34 (WPLTGALSALLMTSGLAMW). Residues 35–40 (FHFNSV) are Mitochondrial intermembrane-facing. A helical membrane pass occupies residues 41–66 (TLLTLGLTTNMLTMYQWWRDIIREST). Over 67–72 (FQGHHT) the chain is Mitochondrial matrix. A helical transmembrane segment spans residues 73–105 (PTVQKGLRYGMILFIISEVLFFTGFFWAFYHSS). Residues 106-128 (LAPTPELGGCWPPTGISPLNPLE) lie on the Mitochondrial intermembrane side of the membrane. A helical membrane pass occupies residues 129–152 (VPLLNTSVLLASGVSITWAHHSLM). At 153-155 (EGN) the chain is on the mitochondrial matrix side. A helical membrane pass occupies residues 156–183 (RNHMLQALFITIALGVYFTLLQASEYYE). The Mitochondrial intermembrane segment spans residues 184–190 (APFTISD). A helical membrane pass occupies residues 191–223 (GIYGSTFFVATGFHGLHVIIGSTFLIVCFFRQL). At 224 to 232 (KFHFTSNHH) the chain is on the mitochondrial matrix side. The chain crosses the membrane as a helical span at residues 233 to 256 (FGFEAAAWYWHFVDVVWLFLYVSI). Residues 257-261 (YWWGS) are Mitochondrial intermembrane-facing.

The protein belongs to the cytochrome c oxidase subunit 3 family. Component of the cytochrome c oxidase (complex IV, CIV), a multisubunit enzyme composed of 14 subunits. The complex is composed of a catalytic core of 3 subunits MT-CO1, MT-CO2 and MT-CO3, encoded in the mitochondrial DNA, and 11 supernumerary subunits COX4I, COX5A, COX5B, COX6A, COX6B, COX6C, COX7A, COX7B, COX7C, COX8 and NDUFA4, which are encoded in the nuclear genome. The complex exists as a monomer or a dimer and forms supercomplexes (SCs) in the inner mitochondrial membrane with NADH-ubiquinone oxidoreductase (complex I, CI) and ubiquinol-cytochrome c oxidoreductase (cytochrome b-c1 complex, complex III, CIII), resulting in different assemblies (supercomplex SCI(1)III(2)IV(1) and megacomplex MCI(2)III(2)IV(2)).

The protein resides in the mitochondrion inner membrane. The catalysed reaction is 4 Fe(II)-[cytochrome c] + O2 + 8 H(+)(in) = 4 Fe(III)-[cytochrome c] + 2 H2O + 4 H(+)(out). In terms of biological role, component of the cytochrome c oxidase, the last enzyme in the mitochondrial electron transport chain which drives oxidative phosphorylation. The respiratory chain contains 3 multisubunit complexes succinate dehydrogenase (complex II, CII), ubiquinol-cytochrome c oxidoreductase (cytochrome b-c1 complex, complex III, CIII) and cytochrome c oxidase (complex IV, CIV), that cooperate to transfer electrons derived from NADH and succinate to molecular oxygen, creating an electrochemical gradient over the inner membrane that drives transmembrane transport and the ATP synthase. Cytochrome c oxidase is the component of the respiratory chain that catalyzes the reduction of oxygen to water. Electrons originating from reduced cytochrome c in the intermembrane space (IMS) are transferred via the dinuclear copper A center (CU(A)) of subunit 2 and heme A of subunit 1 to the active site in subunit 1, a binuclear center (BNC) formed by heme A3 and copper B (CU(B)). The BNC reduces molecular oxygen to 2 water molecules using 4 electrons from cytochrome c in the IMS and 4 protons from the mitochondrial matrix. The protein is Cytochrome c oxidase subunit 3 (MT-CO3) of Neotragus moschatus (Suni).